We begin with the raw amino-acid sequence, 512 residues long: Dihydroniloticin synthase CYP71CD2 (512 aa).

A helical membrane pass occupies residues 1–21 (MNLQLDYFSITSFLVFLVVLF). N436 provides a ligand contact to heme.

This sequence belongs to the cytochrome P450 family. Requires heme as cofactor. As to expression, mainly expressed in petioles and roots, and, to a lower extent, in leaves.

Its subcellular location is the membrane. The enzyme catalyses tirucalla-7,24-dien-3beta-ol + 2 reduced [NADPH--hemoprotein reductase] + 2 O2 = dihydroniloticin + 2 oxidized [NADPH--hemoprotein reductase] + 2 H2O + 2 H(+). The protein operates within secondary metabolite biosynthesis; terpenoid biosynthesis. In terms of biological role, monooxygenase involved in the biosynthesis of limonoids triterpene natural products such as azadirachtin, an antifeedant widely used as bioinsecticide, and possessing many medicinal applications including anti-tumoral, anti-malarial, anti-rheumatic, antibacterial, anti-inflammatory, anti-pyretic and diuretic effects. Catalyzes the conversion of tirucalladienol to dihydroniloticin. In Melia azedarach (Chinaberry tree), this protein is Dihydroniloticin synthase CYP71CD2.